We begin with the raw amino-acid sequence, 233 residues long: Zinc metalloproteinase recombinant fibrinogenase II (233 aa).

The Peptidase M12B domain maps to lysine 19–proline 215. Ca(2+) is bound by residues glutamate 22 and aspartate 106. 3 disulfide bridges follow: cysteine 130–cysteine 210, cysteine 170–cysteine 194, and cysteine 172–cysteine 177. Histidine 155 contributes to the Zn(2+) binding site. Residue glutamate 156 is part of the active site. The Zn(2+) site is built by histidine 159 and histidine 165. Residue asparagine 193 is glycosylated (N-linked (GlcNAc...) asparagine). Ca(2+) contacts are provided by cysteine 210, asparagine 213, asparagine 228, leucine 230, and glutamate 232.

It belongs to the venom metalloproteinase (M12B) family. P-III subfamily. Zn(2+) serves as cofactor. Expressed by the venom gland.

The protein localises to the secreted. Inhibited by PMSF and EDTA. Slightly inhibited by Cu(2+) and Zn(2+). Not inhibited by aprotinin, SBTI, Ca(2+), Mg(2+), Na(+) and K(+). In terms of biological role, snake venom zinc metalloprotease that acts at several levels. It has direct fibrino(geno)lytic activity (Aalpha chain of fibrinogen is cleaved quickly, Bbeta chain slowly, and gamma chain even more slowly) and degradation of TNF-alpha. These activities permit to protect against sepsis and disseminated intravascular coagulation. It inhibits ADP-induced platelet aggregation in human platelet-rich plasma (IC(50)=65.4 ug/ml). It decreases the activity of complement by degrading human C5, C6 and C9 in vitro, decreasing serum levels of C1q, C3 and C4 in rat, and inhibiting the MAC deposition on HUVECs membrane. This inhibition of complement protects against hyperacute rejection that is the main barrier in xenotransplantation. Has preference for Lys at the P1 position. Cleaves insulin B chain at '36-Val-|-Glu-37', '39-Leu-|-Tyr-40', and '48-Phe-|-Phe-49' bonds. Also cleaves fibronectin and type IV collagen. The sequence is that of Zinc metalloproteinase recombinant fibrinogenase II from Deinagkistrodon acutus (Hundred-pace snake).